A 299-amino-acid chain; its full sequence is Lysine exporter LysO (299 aa).

8 consecutive transmembrane segments (helical) span residues Met1 to Arg21, Gln31 to Leu51, Leu58 to Ala78, Leu109 to Leu129, His131 to Leu151, Ile169 to Leu189, Ser207 to Phe227, and Pro277 to Phe297.

It belongs to the LysO family.

It localises to the cell inner membrane. Its function is as follows. Mediates export of lysine. This is Lysine exporter LysO from Escherichia coli (strain K12).